The chain runs to 1217 residues: CST complex subunit CTC1 (1217 aa).

The interval 328-347 is disordered; that stretch reads EADPKPLPMPSNSEDKKDPE.

Belongs to the CTC1 family. As to quaternary structure, component of the CST complex, composed of TEN1/C17orf106, CTC1/C17orf68 and STN1; in the complex interacts directly with STN1. Interacts with ACD and POT1.

It is found in the nucleus. The protein localises to the chromosome. The protein resides in the telomere. Component of the CST complex proposed to act as a specialized replication factor promoting DNA replication under conditions of replication stress or natural replication barriers such as the telomere duplex. The CST complex binds single-stranded DNA with high affinity in a sequence-independent manner, while isolated subunits bind DNA with low affinity by themselves. Initially the CST complex has been proposed to protect telomeres from DNA degradation. However, the CST complex has been shown to be involved in several aspects of telomere replication. The CST complex inhibits telomerase and is involved in telomere length homeostasis; it is proposed to bind to newly telomerase-synthesized 3' overhangs and to terminate telomerase action implicating the association with the ACD:POT1 complex thus interfering with its telomerase stimulation activity. The CST complex is also proposed to be involved in fill-in synthesis of the telomeric C-strand probably implicating recruitment and activation of DNA polymerase alpha. The CST complex facilitates recovery from many forms of exogenous DNA damage; seems to be involved in the re-initiation of DNA replication at repaired forks and/or dormant origins. Involved in telomere maintenance. Involved in genome stability. May be in involved in telomeric C-strand fill-in during late S/G2 phase. The sequence is that of CST complex subunit CTC1 (CTC1) from Homo sapiens (Human).